Reading from the N-terminus, the 168-residue chain is Phosphopantetheine adenylyltransferase (168 aa).

Residue Thr-11 participates in substrate binding. ATP-binding positions include Thr-11–Phe-12 and His-19. Residues Lys-43, Thr-75, and Arg-89 each coordinate substrate. Residues Gly-90–Arg-92, Glu-100, and Trp-125–Ser-131 contribute to the ATP site.

Belongs to the bacterial CoaD family. In terms of assembly, homohexamer. It depends on Mg(2+) as a cofactor.

The protein resides in the cytoplasm. It carries out the reaction (R)-4'-phosphopantetheine + ATP + H(+) = 3'-dephospho-CoA + diphosphate. The protein operates within cofactor biosynthesis; coenzyme A biosynthesis; CoA from (R)-pantothenate: step 4/5. Reversibly transfers an adenylyl group from ATP to 4'-phosphopantetheine, yielding dephospho-CoA (dPCoA) and pyrophosphate. The polypeptide is Phosphopantetheine adenylyltransferase (Wigglesworthia glossinidia brevipalpis).